A 513-amino-acid chain; its full sequence is Lysine--tRNA ligase (513 aa).

Residues Glu-423 and Glu-430 each coordinate Mg(2+).

It belongs to the class-II aminoacyl-tRNA synthetase family. As to quaternary structure, homodimer. Mg(2+) serves as cofactor.

The protein localises to the cytoplasm. The enzyme catalyses tRNA(Lys) + L-lysine + ATP = L-lysyl-tRNA(Lys) + AMP + diphosphate. This is Lysine--tRNA ligase from Anaeromyxobacter dehalogenans (strain 2CP-C).